Reading from the N-terminus, the 231-residue chain is Octanoyltransferase (231 aa).

Positions 49-224 (ADTPDEIWLL…ALQRLLPPVY (176 aa)) constitute a BPL/LPL catalytic domain. Substrate is bound by residues 88–95 (RGGQITYH), 155–157 (ALG), and 168–170 (GLA). Cysteine 186 (acyl-thioester intermediate) is an active-site residue.

The protein belongs to the LipB family.

It localises to the cytoplasm. It catalyses the reaction octanoyl-[ACP] + L-lysyl-[protein] = N(6)-octanoyl-L-lysyl-[protein] + holo-[ACP] + H(+). The protein operates within protein modification; protein lipoylation via endogenous pathway; protein N(6)-(lipoyl)lysine from octanoyl-[acyl-carrier-protein]: step 1/2. Catalyzes the transfer of endogenously produced octanoic acid from octanoyl-acyl-carrier-protein onto the lipoyl domains of lipoate-dependent enzymes. Lipoyl-ACP can also act as a substrate although octanoyl-ACP is likely to be the physiological substrate. In Aromatoleum aromaticum (strain DSM 19018 / LMG 30748 / EbN1) (Azoarcus sp. (strain EbN1)), this protein is Octanoyltransferase.